Reading from the N-terminus, the 355-residue chain is Tetraacyldisaccharide 4'-kinase (355 aa).

54 to 61 is an ATP binding site; the sequence is TVGGAGKT.

It belongs to the LpxK family.

The catalysed reaction is a lipid A disaccharide + ATP = a lipid IVA + ADP + H(+). It functions in the pathway glycolipid biosynthesis; lipid IV(A) biosynthesis; lipid IV(A) from (3R)-3-hydroxytetradecanoyl-[acyl-carrier-protein] and UDP-N-acetyl-alpha-D-glucosamine: step 6/6. In terms of biological role, transfers the gamma-phosphate of ATP to the 4'-position of a tetraacyldisaccharide 1-phosphate intermediate (termed DS-1-P) to form tetraacyldisaccharide 1,4'-bis-phosphate (lipid IVA). This chain is Tetraacyldisaccharide 4'-kinase, found in Rhizobium rhizogenes (strain K84 / ATCC BAA-868) (Agrobacterium radiobacter).